A 143-amino-acid polypeptide reads, in one-letter code: Phospholipase A2 isozymes PA3A/PA3B/PA5 (143 aa).

Positions 10, 12, and 14 each coordinate Ca(2+). 3 disulfide bridges follow: C11/C33, C32/C72, and C39/C65. H36 is a catalytic residue. Ca(2+) is bound at residue D37.

Belongs to the phospholipase A2 family. Group III subfamily. Requires Ca(2+) as cofactor. As to expression, expressed by the venom gland.

It is found in the secreted. The enzyme catalyses a 1,2-diacyl-sn-glycero-3-phosphocholine + H2O = a 1-acyl-sn-glycero-3-phosphocholine + a fatty acid + H(+). Its function is as follows. PLA2 catalyzes the calcium-dependent hydrolysis of the 2-acyl groups in 3-sn-phosphoglycerides. The sequence is that of Phospholipase A2 isozymes PA3A/PA3B/PA5 from Heloderma suspectum (Gila monster).